Consider the following 86-residue polypeptide: MTRFVLFICCFFLIGMVVECKDGYLVGNDGCKYSCFTRPGTYCANECSRVKGKDGYCYAWMACYCYSMPNWVKTWDRATNRCGRGK.

The N-terminal stretch at 1-20 is a signal peptide; that stretch reads MTRFVLFICCFFLIGMVVEC. An LCN-type CS-alpha/beta domain is found at 21-83; that stretch reads KDGYLVGNDG…TWDRATNRCG (63 aa). 4 disulfide bridges follow: Cys31/Cys82, Cys35/Cys57, Cys43/Cys63, and Cys47/Cys65. At Arg84 the chain carries Arginine amide.

The protein belongs to the long (4 C-C) scorpion toxin superfamily. Sodium channel inhibitor family. Beta subfamily. As to expression, expressed by the venom gland.

Its subcellular location is the secreted. Functionally, beta toxins bind voltage-independently at site-4 of sodium channels (Nav) and shift the voltage of activation toward more negative potentials thereby affecting sodium channel activation and promoting spontaneous and repetitive firing. Strongly affects skeletal muscle channels Nav1.4/SCN4A, poorly affects the neuronal channels Nav1.6/SCN8A and Nav1.2/SCN2A. Induces spastic paralysis of rear limbs, increased salivation, apnea, tachycardia and increased perspiration. This Tityus zulianus (Venezuelan scorpion) protein is Beta-toxin Tz1.